A 374-amino-acid chain; its full sequence is Chaperone protein DnaJ (374 aa).

Positions 5–70 constitute a J domain; sequence DYYEVLGVNR…RKRASYDQFG (66 aa). The segment at 133–210 adopts a CR-type zinc-finger fold; sequence GLSRTIKVPT…CHGQGRQQQT (78 aa). Zn(2+)-binding residues include C146, C149, C162, C165, C184, C187, C198, and C201. CXXCXGXG motif repeat units lie at residues 146 to 153, 162 to 169, 184 to 191, and 198 to 205; these read CKTCNGSG, CPRCNGSG, CSVCRGRG, and CTDCHGQG.

Belongs to the DnaJ family. In terms of assembly, homodimer. Zn(2+) serves as cofactor.

It localises to the cytoplasm. In terms of biological role, participates actively in the response to hyperosmotic and heat shock by preventing the aggregation of stress-denatured proteins and by disaggregating proteins, also in an autonomous, DnaK-independent fashion. Unfolded proteins bind initially to DnaJ; upon interaction with the DnaJ-bound protein, DnaK hydrolyzes its bound ATP, resulting in the formation of a stable complex. GrpE releases ADP from DnaK; ATP binding to DnaK triggers the release of the substrate protein, thus completing the reaction cycle. Several rounds of ATP-dependent interactions between DnaJ, DnaK and GrpE are required for fully efficient folding. Also involved, together with DnaK and GrpE, in the DNA replication of plasmids through activation of initiation proteins. The polypeptide is Chaperone protein DnaJ (Coxiella burnetii (strain CbuG_Q212) (Coxiella burnetii (strain Q212))).